We begin with the raw amino-acid sequence, 720 residues long: Methionine--tRNA ligase (720 aa).

The short motif at Pro-27–His-37 is the 'HIGH' region element. The Zn(2+) site is built by Cys-158, Cys-161, Cys-171, and Cys-174. A 'KMSKS' region motif is present at residues Lys-348–Ser-352. Position 351 (Lys-351) interacts with ATP. One can recognise a tRNA-binding domain in the interval Asp-614–Lys-720.

It belongs to the class-I aminoacyl-tRNA synthetase family. MetG type 1 subfamily. In terms of assembly, homodimer. It depends on Zn(2+) as a cofactor.

It localises to the cytoplasm. The enzyme catalyses tRNA(Met) + L-methionine + ATP = L-methionyl-tRNA(Met) + AMP + diphosphate. Is required not only for elongation of protein synthesis but also for the initiation of all mRNA translation through initiator tRNA(fMet) aminoacylation. The chain is Methionine--tRNA ligase from Burkholderia ambifaria (strain MC40-6).